Reading from the N-terminus, the 455-residue chain is Chromosomal replication initiator protein DnaA (455 aa).

The segment at 1–74 (MFNFEKFWQH…IQSAYGYAGV (74 aa)) is domain I, interacts with DnaA modulators. The segment at 74–117 (VELLPVFQISEDSDTPERIVTPEPQHNLQTTPTRAPQREFAKDL) is domain II. The segment at 118–334 (KLNEKYTFDN…GALVKVQAYA (217 aa)) is domain III, AAA+ region. Residues Gly-162, Gly-164, Lys-165, and Thr-166 each coordinate ATP. Residues 335-455 (TIEKADIDIN…VFDLKQMLEH (121 aa)) are domain IV, binds dsDNA.

Belongs to the DnaA family. Oligomerizes as a right-handed, spiral filament on DNA at oriC.

It is found in the cytoplasm. In terms of biological role, plays an essential role in the initiation and regulation of chromosomal replication. ATP-DnaA binds to the origin of replication (oriC) to initiate formation of the DNA replication initiation complex once per cell cycle. Binds the DnaA box (a 9 base pair repeat at the origin) and separates the double-stranded (ds)DNA. Forms a right-handed helical filament on oriC DNA; dsDNA binds to the exterior of the filament while single-stranded (ss)DNA is stabiized in the filament's interior. The ATP-DnaA-oriC complex binds and stabilizes one strand of the AT-rich DNA unwinding element (DUE), permitting loading of DNA polymerase. After initiation quickly degrades to an ADP-DnaA complex that is not apt for DNA replication. Binds acidic phospholipids. This is Chromosomal replication initiator protein DnaA from Lactobacillus acidophilus (strain ATCC 700396 / NCK56 / N2 / NCFM).